The chain runs to 294 residues: tRNA dimethylallyltransferase (294 aa).

Position 10–17 (10–17 (GPTAVGKT)) interacts with ATP. 12–17 (TAVGKT) is a substrate binding site. The interval 35–38 (DSQQ) is interaction with substrate tRNA.

The protein belongs to the IPP transferase family. As to quaternary structure, monomer. Mg(2+) serves as cofactor.

The enzyme catalyses adenosine(37) in tRNA + dimethylallyl diphosphate = N(6)-dimethylallyladenosine(37) in tRNA + diphosphate. Its function is as follows. Catalyzes the transfer of a dimethylallyl group onto the adenine at position 37 in tRNAs that read codons beginning with uridine, leading to the formation of N6-(dimethylallyl)adenosine (i(6)A). The chain is tRNA dimethylallyltransferase from Streptococcus pneumoniae serotype 2 (strain D39 / NCTC 7466).